The following is a 235-amino-acid chain: Small ribosomal subunit protein uS3 (235 aa).

The region spanning 39–107 is the KH type-2 domain; sequence IREILHKELK…DVVINIVEIR (69 aa). The segment at 215–235 is disordered; that stretch reads QDKRMAESDGGGSSRPRRDAA.

Belongs to the universal ribosomal protein uS3 family. As to quaternary structure, part of the 30S ribosomal subunit. Forms a tight complex with proteins S10 and S14.

Binds the lower part of the 30S subunit head. Binds mRNA in the 70S ribosome, positioning it for translation. The chain is Small ribosomal subunit protein uS3 from Rhodopseudomonas palustris (strain TIE-1).